A 390-amino-acid chain; its full sequence is Curcumin synthase 3 (390 aa).

Residue C164 is part of the active site.

Belongs to the thiolase-like superfamily. Chalcone/stilbene synthases family. Homodimer.

It catalyses the reaction (E)-feruloylacetyl-CoA + (E)-feruloyl-CoA + H2O = curcumin + CO2 + 2 CoA. The enzyme catalyses (E)-feruloylacetyl-CoA + (E)-4-coumaroyl-CoA + H2O = demethoxycurcumin + CO2 + 2 CoA. The catalysed reaction is (4-coumaroyl)acetyl-CoA + 4-coumaroyl-CoA + H2O = bisdemethoxycurcumin + CO2 + 2 CoA. Its pathway is secondary metabolite biosynthesis; flavonoid biosynthesis. In terms of biological role, catalyzes the synthesis of curcumin by condensing feruloyl-CoA with a diketide-CoA in the curcuminoid biosynthesis. Also acts as a demethoxycurcumin synthase by accepting 4-coumaroyl-CoA as a starter substrate instead of feruloyl-CoA. This Curcuma longa (Turmeric) protein is Curcumin synthase 3 (CURS3).